Here is a 106-residue protein sequence, read N- to C-terminus: Small ribosomal subunit protein uS10 (106 aa).

The protein belongs to the universal ribosomal protein uS10 family. In terms of assembly, part of the 30S ribosomal subunit.

In terms of biological role, involved in the binding of tRNA to the ribosomes. This is Small ribosomal subunit protein uS10 from Archaeoglobus fulgidus (strain ATCC 49558 / DSM 4304 / JCM 9628 / NBRC 100126 / VC-16).